We begin with the raw amino-acid sequence, 215 residues long: uncharacterized protein (215 aa).

Residues 1–29 (MDKVQSGFLILFLFLMECQLHLCLPYADG) form the signal peptide. Residues 30 to 100 (LHPTGNITGL…IIRHRPALVK (71 aa)) are Extracellular-facing. The helical transmembrane segment at 101-121 (VILISSVAFSIALICGMAISY) threads the bilayer. The Cytoplasmic segment spans residues 122-215 (MIYRLAQAEE…ASHNGKMEDL (94 aa)). Positions 191 to 215 (LKEEQNSVTENKTKNASHNGKMEDL) are disordered. Over residues 196–208 (NSVTENKTKNASH) the composition is skewed to polar residues.

Its subcellular location is the membrane. This is an uncharacterized protein from Homo sapiens (Human).